Here is a 452-residue protein sequence, read N- to C-terminus: Bifunctional purine biosynthesis protein PurH (452 aa).

In terms of domain architecture, MGS-like spans M1 to F115.

Belongs to the PurH family.

It carries out the reaction (6R)-10-formyltetrahydrofolate + 5-amino-1-(5-phospho-beta-D-ribosyl)imidazole-4-carboxamide = 5-formamido-1-(5-phospho-D-ribosyl)imidazole-4-carboxamide + (6S)-5,6,7,8-tetrahydrofolate. The catalysed reaction is IMP + H2O = 5-formamido-1-(5-phospho-D-ribosyl)imidazole-4-carboxamide. It functions in the pathway purine metabolism; IMP biosynthesis via de novo pathway; 5-formamido-1-(5-phospho-D-ribosyl)imidazole-4-carboxamide from 5-amino-1-(5-phospho-D-ribosyl)imidazole-4-carboxamide (10-formyl THF route): step 1/1. Its pathway is purine metabolism; IMP biosynthesis via de novo pathway; IMP from 5-formamido-1-(5-phospho-D-ribosyl)imidazole-4-carboxamide: step 1/1. This chain is Bifunctional purine biosynthesis protein PurH, found in Thermotoga maritima (strain ATCC 43589 / DSM 3109 / JCM 10099 / NBRC 100826 / MSB8).